Consider the following 600-residue polypeptide: Putative dehydrogenase XoxF (600 aa).

Residues 1–21 (MKNLMNGACLALLMSGTAALA) form the signal peptide. Ca(2+) contacts are provided by Glu-192 and Asn-276. Residue Asp-318 is the Proton acceptor of the active site.

The protein belongs to the bacterial PQQ dehydrogenase family. Pyrroloquinoline quinone is required as a cofactor. Requires Ca(2+) as cofactor.

The chain is Putative dehydrogenase XoxF (xoxF) from Paracoccus denitrificans.